A 334-amino-acid polypeptide reads, in one-letter code: Probable tRNA pseudouridine synthase B (334 aa).

The Nucleophile role is filled by aspartate 82. The PUA domain maps to 250-325 (LPKIWIKDSA…IAVDVEKVFM (76 aa)).

This sequence belongs to the pseudouridine synthase TruB family. Type 2 subfamily.

It carries out the reaction uridine(55) in tRNA = pseudouridine(55) in tRNA. In terms of biological role, could be responsible for synthesis of pseudouridine from uracil-55 in the psi GC loop of transfer RNAs. The sequence is that of Probable tRNA pseudouridine synthase B from Pyrococcus abyssi (strain GE5 / Orsay).